The chain runs to 70 residues: Small ribosomal subunit protein bS18c (70 aa).

Belongs to the bacterial ribosomal protein bS18 family. In terms of assembly, part of the 30S ribosomal subunit.

The protein localises to the plastid. It localises to the chloroplast. This is Small ribosomal subunit protein bS18c from Pyropia yezoensis (Susabi-nori).